The chain runs to 217 residues: MSDHAEHAADAADTDAPEGDDAGGDDGEQAGDDGTSALSERVRALDADNADALADDVAALEARVETLTDELADAEDEVADLTERVQTKQADFKNYKERAKRKQEEIRERATEDLVERLLDVRDNLDRALDQEESESDEDGIREGVELTRDEFDRVLETEGVTEIRPEPGDSVDAARHEVMMRVDSDQPAGTIVDVYRPGYEMSGRVVRAAQVTVSEE.

A compositionally biased stretch (basic and acidic residues) spans 1–10; it reads MSDHAEHAAD. The interval 1 to 39 is disordered; it reads MSDHAEHAADAADTDAPEGDDAGGDDGEQAGDDGTSALS. Acidic residues predominate over residues 12-31; it reads ADTDAPEGDDAGGDDGEQAG.

It belongs to the GrpE family. As to quaternary structure, homodimer.

It localises to the cytoplasm. Functionally, participates actively in the response to hyperosmotic and heat shock by preventing the aggregation of stress-denatured proteins, in association with DnaK and GrpE. It is the nucleotide exchange factor for DnaK and may function as a thermosensor. Unfolded proteins bind initially to DnaJ; upon interaction with the DnaJ-bound protein, DnaK hydrolyzes its bound ATP, resulting in the formation of a stable complex. GrpE releases ADP from DnaK; ATP binding to DnaK triggers the release of the substrate protein, thus completing the reaction cycle. Several rounds of ATP-dependent interactions between DnaJ, DnaK and GrpE are required for fully efficient folding. The sequence is that of Protein GrpE from Halobacterium salinarum (strain ATCC 29341 / DSM 671 / R1).